A 499-amino-acid polypeptide reads, in one-letter code: Serine/threonine protein phosphatase 2A 57 kDa regulatory subunit B' beta isoform (499 aa).

Residues Met-1–Pro-13 are compositionally biased toward basic residues. Positions Met-1–Pro-65 are disordered.

This sequence belongs to the phosphatase 2A regulatory subunit B56 family. In terms of assembly, PP2A consists of a common heteromeric enzyme, composed of a catalytic subunit (subunits C), a constant regulatory subunit (subunit A), and a variety of regulatory subunits such as subunits B (the R2/B/PR55/B55, R3/B''/PR72/PR130/PR59 and R5/B'/B56 families). Interacts with BZR1. Interacts with BRI1. Interacts with SRK2E/OST1. Expressed ubiquitously, higher levels in cotyledons and flowers.

The protein localises to the nucleus. It is found in the cytoplasm. Functionally, the B regulatory subunit may modulate substrate selectivity and catalytic activity, and may also direct the localization of the catalytic enzyme to a particular subcellular compartment. Required for the formation of the PP2A holoenzyme that positively regulates brassinosteroid signaling by dephosphorylating and activating BZR1. In Arabidopsis thaliana (Mouse-ear cress), this protein is Serine/threonine protein phosphatase 2A 57 kDa regulatory subunit B' beta isoform (B'BETA).